A 60-amino-acid chain; its full sequence is UPF0434 protein YcaR (60 aa).

Belongs to the UPF0434 family.

In Escherichia coli O139:H28 (strain E24377A / ETEC), this protein is UPF0434 protein YcaR.